The following is a 576-amino-acid chain: Flagellin B (576 aa).

This sequence belongs to the bacterial flagellin family. In terms of assembly, heteromer of FlaA and FlaB. Interacts with FliW. Interacts with FliS.

It is found in the secreted. The protein localises to the bacterial flagellum. Functionally, flagellin is the subunit protein which polymerizes to form the filaments of bacterial flagella. The chain is Flagellin B (flaB) from Campylobacter jejuni subsp. jejuni serotype O:6 (strain 81116 / NCTC 11828).